The chain runs to 301 residues: Probable alpha-L-glutamate ligase (301 aa).

In terms of domain architecture, ATP-grasp spans L104–E287. ATP contacts are provided by residues K141, E178–F179, D187, and R211–N213. Mg(2+) contacts are provided by D248, E260, and N262. Mn(2+) contacts are provided by D248, E260, and N262.

This sequence belongs to the RimK family. The cofactor is Mg(2+). Requires Mn(2+) as cofactor.

This chain is Probable alpha-L-glutamate ligase, found in Hydrogenovibrio crunogenus (strain DSM 25203 / XCL-2) (Thiomicrospira crunogena).